We begin with the raw amino-acid sequence, 196 residues long: uncharacterized protein (196 aa).

The tract at residues 44–80 (RSVAVPGTEGKKAQNLRQLPAARLTYPTSSSTRPSHA) is disordered.

This is an uncharacterized protein from Treponema pallidum (strain Nichols).